We begin with the raw amino-acid sequence, 750 residues long: Dual specificity tyrosine-phosphorylation-regulated kinase 1A (750 aa).

Disordered regions lie at residues 56-81 (ALPY…RDPA) and 104-129 (YAKK…KVYN). The short motif at 109 to 126 (RRHQQGQGDDSSHKKERK) is the Bipartite nuclear localization signal element. Residues 151-471 (YEIDSLIGKG…PYYALQHSFF (321 aa)) enclose the Protein kinase domain. ATP contacts are provided by residues 157–165 (IGKGSFGQV), Lys-180, and 230–233 (FEML). Catalysis depends on Asp-279, which acts as the Proton acceptor. 4 disordered regions span residues 400–434 (TKDG…AGES), 477–531 (EGTN…RHSG), 583–666 (SQKN…GNQA), and 731–750 (DRED…VASS). Positions 477 to 493 (EGTNTSNSVSTSPAMEQ) are enriched in polar residues. A compositionally biased stretch (low complexity) spans 494 to 517 (SQSSGTTSSTSSSSGGSSGTSNSG). Residues 584-612 (QKNVPHHHGNGSHHHHHHHHHHHGQHILS) are histidine-rich domain (HRD). Basic residues predominate over residues 587–608 (VPHHHGNGSHHHHHHHHHHHGQ). Over residues 610–621 (ILSNRTRTRIYN) the composition is skewed to polar residues. The span at 622–659 (SPSTSSSTQDSMDIGNSHHSMTSLSSSTTSSSTSSSST) shows a compositional bias: low complexity. The segment covering 741-750 (CVQQSPVASS) has biased composition (polar residues).

This sequence belongs to the protein kinase superfamily. CMGC Ser/Thr protein kinase family. MNB/DYRK subfamily. In terms of processing, autophosphorylated on tyrosine residues.

Its subcellular location is the nucleus. The protein resides in the nucleus speckle. The catalysed reaction is L-seryl-[protein] + ATP = O-phospho-L-seryl-[protein] + ADP + H(+). It catalyses the reaction L-threonyl-[protein] + ATP = O-phospho-L-threonyl-[protein] + ADP + H(+). The enzyme catalyses L-tyrosyl-[protein] + ATP = O-phospho-L-tyrosyl-[protein] + ADP + H(+). It carries out the reaction [DNA-directed RNA polymerase] + ATP = phospho-[DNA-directed RNA polymerase] + ADP + H(+). In terms of biological role, dual-specificity kinase which possesses both serine/threonine and tyrosine kinase activities. Exhibits a substrate preference for proline at position P+1 and arginine at position P-3. Plays an important role in double-strand breaks (DSBs) repair following DNA damage. Mechanistically, phosphorylates RNF169 and increases its ability to block accumulation of TP53BP1 at the DSB sites thereby promoting homologous recombination repair (HRR). Also acts as a positive regulator of transcription by acting as a CTD kinase that mediates phosphorylation of the CTD (C-terminal domain) of the large subunit of RNA polymerase II (RNAP II) POLR2A. Modulates alternative splicing by phosphorylating the splice factor SRSF6. Phosphorylates SEPTIN4, SEPTIN5 and SF3B1. The protein is Dual specificity tyrosine-phosphorylation-regulated kinase 1A of Xenopus laevis (African clawed frog).